We begin with the raw amino-acid sequence, 379 residues long: Putative acetyl-CoA C-acetyltransferase VraB (379 aa).

The active-site Acyl-thioester intermediate is the cysteine 86. Histidine 338 functions as the Proton acceptor in the catalytic mechanism.

The protein belongs to the thiolase-like superfamily. Thiolase family.

In Staphylococcus aureus (strain MRSA252), this protein is Putative acetyl-CoA C-acetyltransferase VraB (vraB).